The sequence spans 667 residues: WD repeat-containing protein 48 homolog (667 aa).

WD repeat units lie at residues 26 to 65 (QHRNGVNALQLDSNNGKLYSAGRDAIIRVWNTRTESNDKY), 71 to 110 (HHNDWVNDIVLCCNGRNLISASCDTTVKVWNAHKGFCMST), 113 to 152 (THRDYVQALAYAKDREQVASAGLDKAIFLWDVNTLTALTA), 164 to 203 (GSKDSIYSLAMNPSGTVIVSGSTENILRIWDPRTCMRSMK), 206 to 245 (GHTENVRCLVVSPDGNQVVSGSSDGTIKVWNLGQQRCIQT), 248 to 287 (VHKEGVWSLLMSENFQYIISGSRDRNIIVTEMRNPSNKML), 290 to 329 (EEKAPVLSLGYNIDKTGVWATTWNSDIRCWKLPMYDRCTL), and 349 to 388 (KGGAAIKECTVLNDKRYIITKDSQDQVVVYDVLRVIKKEE). The disordered stretch occupies residues 591–615 (ETTPSGGNANNSLQNSQSDANSEGS).

It belongs to the WD repeat WDR48 family. As to quaternary structure, catalytic component of the Usp12-46 deubiquitylase complex consisting of Usp12-46, Wdr20 and Uaf1; regulatory subunit that, together wtih Wdr20, stabilizes Usp12-46. The Usp12-46 deubiquitylase complex associates with arr/arrow; the interaction leads to deubiquitination and stabilization of arr/arrow.

Its function is as follows. Regulatory component of the Usp12-46 deubiquitylase complex. activates deubiquitination by increasing the catalytic turnover without increasing the affinity of deubiquitinating enzymes for the substrate. The complex deubiquitylates the wg/wingless-signaling receptor arr/arrow, which stabilizes the receptor and increases its concentration at the cell surface; this enhances the sensitivity of cells to wg/wingless-signal stimulation. This increases the amplitude and spatial range of the signaling response to the wg/wingless morphogen gradient, facilitating the precise concentration-dependent regulation of its target genes. Together with Wdr20 and Usp12-46 required for wg/wingless-mediated signaling in the wing imaginal disc and for wg/wingless-dependent regulation of intestinal stem cell proliferation. This chain is WD repeat-containing protein 48 homolog, found in Drosophila virilis (Fruit fly).